The following is a 429-amino-acid chain: Adenylosuccinate synthetase (429 aa).

Residues 12 to 18 (GDEGKGK) and 40 to 42 (GHT) contribute to the GTP site. D13 (proton acceptor) is an active-site residue. The Mg(2+) site is built by D13 and G40. IMP contacts are provided by residues 13-16 (DEGK), 38-41 (NAGH), T129, R143, Q223, T238, and R302. H41 (proton donor) is an active-site residue. 298-304 (VVTGRKR) serves as a coordination point for substrate. GTP is bound by residues R304, 330-332 (KLD), and 412-414 (STS).

It belongs to the adenylosuccinate synthetase family. In terms of assembly, homodimer. Mg(2+) serves as cofactor.

It localises to the cytoplasm. It catalyses the reaction IMP + L-aspartate + GTP = N(6)-(1,2-dicarboxyethyl)-AMP + GDP + phosphate + 2 H(+). The protein operates within purine metabolism; AMP biosynthesis via de novo pathway; AMP from IMP: step 1/2. Plays an important role in the de novo pathway of purine nucleotide biosynthesis. Catalyzes the first committed step in the biosynthesis of AMP from IMP. In Bartonella tribocorum (strain CIP 105476 / IBS 506), this protein is Adenylosuccinate synthetase.